The following is a 180-amino-acid chain: Endoribonuclease YbeY (180 aa).

His118, His122, and His128 together coordinate Zn(2+).

It belongs to the endoribonuclease YbeY family. The cofactor is Zn(2+).

It is found in the cytoplasm. Functionally, single strand-specific metallo-endoribonuclease involved in late-stage 70S ribosome quality control and in maturation of the 3' terminus of the 16S rRNA. The polypeptide is Endoribonuclease YbeY (Rhodococcus jostii (strain RHA1)).